The primary structure comprises 890 residues: Alanine--tRNA ligase (890 aa).

Positions 567, 571, 680, and 684 each coordinate Zn(2+).

Belongs to the class-II aminoacyl-tRNA synthetase family. It depends on Zn(2+) as a cofactor.

It is found in the cytoplasm. It catalyses the reaction tRNA(Ala) + L-alanine + ATP = L-alanyl-tRNA(Ala) + AMP + diphosphate. In terms of biological role, catalyzes the attachment of alanine to tRNA(Ala) in a two-step reaction: alanine is first activated by ATP to form Ala-AMP and then transferred to the acceptor end of tRNA(Ala). Also edits incorrectly charged Ser-tRNA(Ala) and Gly-tRNA(Ala) via its editing domain. The chain is Alanine--tRNA ligase from Ruegeria pomeroyi (strain ATCC 700808 / DSM 15171 / DSS-3) (Silicibacter pomeroyi).